A 467-amino-acid polypeptide reads, in one-letter code: Glutamyl-tRNA(Gln) amidotransferase subunit A (467 aa).

Residues Lys57 and Ser132 each act as charge relay system in the active site. The active-site Acyl-ester intermediate is the Ser156.

The protein belongs to the amidase family. GatA subfamily. In terms of assembly, heterotrimer of A, B and C subunits.

The catalysed reaction is L-glutamyl-tRNA(Gln) + L-glutamine + ATP + H2O = L-glutaminyl-tRNA(Gln) + L-glutamate + ADP + phosphate + H(+). Its function is as follows. Allows the formation of correctly charged Gln-tRNA(Gln) through the transamidation of misacylated Glu-tRNA(Gln) in organisms which lack glutaminyl-tRNA synthetase. The reaction takes place in the presence of glutamine and ATP through an activated gamma-phospho-Glu-tRNA(Gln). This is Glutamyl-tRNA(Gln) amidotransferase subunit A from Pseudothermotoga lettingae (strain ATCC BAA-301 / DSM 14385 / NBRC 107922 / TMO) (Thermotoga lettingae).